The chain runs to 228 residues: MNLIRIELRKMKMGWYIRGALIANVIIMGFMWLISYSEKADGGVSFQSTDEAFLIIGTFVRAVFIVFGAVLIVKLVISEYKNKTILVMFTYPISRKKLLTAKLMIAGGLTFITILLSNILIAAGFFWLNSICHFIPGELTSEIISQQAVKMAVFAFGAAGTSLVPIFFGMRRHSVPATIISSVVIVMLISSTSPGFSISSVVYIPLSLAAFGLFFSYMAIRNADKQDA.

6 helical membrane-spanning segments follow: residues 14-34 (GWYI…MWLI), 53-73 (FLII…VLIV), 108-128 (GLTF…FFWL), 148-168 (AVKM…PIFF), 178-198 (TIIS…GFSI), and 200-220 (SVVY…YMAI).

The protein resides in the cell membrane. This is an uncharacterized protein from Bacillus subtilis (strain 168).